Reading from the N-terminus, the 473-residue chain is tRNA modification GTPase MnmE (473 aa).

Arg28, Glu93, and Arg132 together coordinate (6S)-5-formyl-5,6,7,8-tetrahydrofolate. The region spanning Gly228–Ala394 is the TrmE-type G domain. GTP contacts are provided by residues Asn238 to Thr243, Ser257 to Thr263, and Asp282 to Gly285. Residues Ser242 and Thr263 each contribute to the Mg(2+) site. Lys473 is a binding site for (6S)-5-formyl-5,6,7,8-tetrahydrofolate.

This sequence belongs to the TRAFAC class TrmE-Era-EngA-EngB-Septin-like GTPase superfamily. TrmE GTPase family. Homodimer. Heterotetramer of two MnmE and two MnmG subunits. K(+) serves as cofactor.

The protein resides in the cytoplasm. Exhibits a very high intrinsic GTPase hydrolysis rate. Involved in the addition of a carboxymethylaminomethyl (cmnm) group at the wobble position (U34) of certain tRNAs, forming tRNA-cmnm(5)s(2)U34. This chain is tRNA modification GTPase MnmE, found in Chlorobium chlorochromatii (strain CaD3).